The following is a 122-amino-acid chain: Crustacean hyperglycemic hormones 5 (122 aa).

The signal sequence occupies residues 1 to 26 (MSLGLIASRLVAVALVVVVACSTTWA). 3 cysteine pairs are disulfide-bonded: C55–C91, C71–C87, and C74–C100. Residue V120 is modified to Valine amide.

This sequence belongs to the arthropod CHH/MIH/GIH/VIH hormone family.

Its subcellular location is the secreted. Hormone found in the sinus gland of isopods and decapods which controls the blood sugar level. Has a secretagogue action over the amylase released from the midgut gland. May act as a stress hormone and may be involved in the control of molting and reproduction. The protein is Crustacean hyperglycemic hormones 5 (CHH5) of Penaeus monodon (Giant tiger prawn).